We begin with the raw amino-acid sequence, 460 residues long: Pentatricopeptide repeat-containing protein At5g43790 (460 aa).

9 PPR repeats span residues 70–107 (SVFLYNTLISSIVSNHNSTQTHLAFSLYDQILSSRSNF), 111–142 (NEFTYPSLFKASGFDAQWHRHGRALHAHVLKF), 149–179 (DRFVQAALVGFYANCGKLREARSLFERIREP), 180–214 (DLATWNTLLAAYANSEEIDSDEEVLLLFMRMQVRP), 215–249 (NELSLVALIKSCANLGEFVRGVWAHVYVLKNNLTL), 250–280 (NQFVGTSLIDLYSKCGCLSFARKVFDEMSQR), 281–315 (DVSCYNAMIRGLAVHGFGQEGIELYKSLISQGLVP), 316–351 (DSATFVVTISACSHSGLVDEGLQIFNSMKAVYGIEP), and 352–382 (KVEHYGCLVDLLGRSGRLEEAEECIKKMPVK). The tract at residues 387-460 (LWRSFLGSSQ…NKSPGISTLN (74 aa)) is type E motif; degenerate.

Belongs to the PPR family. PCMP-E subfamily.

The protein is Pentatricopeptide repeat-containing protein At5g43790 (PCMP-E30) of Arabidopsis thaliana (Mouse-ear cress).